A 1347-amino-acid chain; its full sequence is Protocadherin-11 X-linked (1347 aa).

The first 23 residues, 1 to 23, serve as a signal peptide directing secretion; that stretch reads MDLLSGTYIFAVLLACVVFHSGA. Topologically, residues 24-812 are extracellular; the sequence is QEKNYTIREE…VSSPTSDYVK (789 aa). 7 Cadherin domains span residues 26-139, 140-249, 250-355, 362-466, 467-570, 571-673, and 677-795; these read KNYT…APLF, PATV…HPVF, KETE…VPSI, NPVN…APVF, TQSF…SPVF, THNE…KPVF, and PSNY…APVT. N-linked (GlcNAc...) asparagine glycans are attached at residues N27, N48, and N54. N-linked (GlcNAc...) asparagine glycosylation is present at N344. N553 carries an N-linked (GlcNAc...) asparagine glycan. N-linked (GlcNAc...) asparagine glycosylation occurs at N773. A helical membrane pass occupies residues 813–833; the sequence is ILVAAVAGTITVVVVIFITAV. Topologically, residues 834–1347 are cytoplasmic; sequence VRCRQAPHLK…DSPVMEEHPL (514 aa). 3 disordered regions span residues 1057–1091, 1097–1116, and 1325–1347; these read LPEG…GYPQ, RATP…ESTF, and TFTP…EHPL.

Its subcellular location is the cell membrane. Its function is as follows. Potential calcium-dependent cell-adhesion protein. In Pan troglodytes (Chimpanzee), this protein is Protocadherin-11 X-linked (PCDH11X).